The primary structure comprises 588 residues: Arylsulfatase L (588 aa).

The N-terminal stretch at M1–S31 is a signal peptide. N32 is a glycosylation site (N-linked (GlcNAc...) asparagine). Ca(2+) is bound by residues D46 and D47. A glycan (N-linked (GlcNAc...) asparagine) is linked at N58. Residue C86 participates in Ca(2+) binding. The active-site Nucleophile is C86. Residue C86 is modified to 3-oxoalanine (Cys). The N-linked (GlcNAc...) asparagine glycan is linked to N125. K145 is a binding site for substrate. Residue H147 is part of the active site. N258 is a glycosylation site (N-linked (GlcNAc...) asparagine). H301 contacts substrate. N344 carries N-linked (GlcNAc...) asparagine glycosylation. Positions 353 and 354 each coordinate Ca(2+). K378 provides a ligand contact to substrate.

The protein belongs to the sulfatase family. Requires Ca(2+) as cofactor. Post-translationally, the conversion to 3-oxoalanine (also known as C-formylglycine, FGly), of a serine or cysteine residue in prokaryotes and of a cysteine residue in eukaryotes, is critical for catalytic activity.

It is found in the golgi apparatus. Its subcellular location is the golgi stack. It catalyses the reaction an aryl sulfate + H2O = a phenol + sulfate + H(+). Exhibits arylsulfatase activity towards the artificial substrate 4-methylumbelliferyl sulfate. May be essential for the correct composition of cartilage and bone matrix during development. Has no activity toward steroid sulfates. This chain is Arylsulfatase L (ARSL), found in Macaca fascicularis (Crab-eating macaque).